The chain runs to 451 residues: E3 ubiquitin-protein ligase trul-1 (451 aa).

The RING-type; atypical zinc-finger motif lies at 13–54; sequence CSICFEDLKQNDKISAIVCGHIYHHGCISQWIATKRQCPSCR. Coiled-coil stretches lie at residues 96–130 and 209–243; these read LKVEQEKLGTLNTENKNLKDTVKSLEKKIIREKDK and NKDLTDKRREAAKEIEQLKMEVQSLKRAAQEDAAI. Disordered stretches follow at residues 270–297 and 389–442; these read RDVLETETPPPAKRKSMGFDESSQMIDP and KIPN…SSTS. A compositionally biased stretch (low complexity) spans 427–442; it reads STRISSFFSRTTSSTS.

The protein belongs to the TRAIP family.

It is found in the nucleus. Its subcellular location is the chromosome. The catalysed reaction is S-ubiquitinyl-[E2 ubiquitin-conjugating enzyme]-L-cysteine + [acceptor protein]-L-lysine = [E2 ubiquitin-conjugating enzyme]-L-cysteine + N(6)-ubiquitinyl-[acceptor protein]-L-lysine.. It functions in the pathway protein modification; protein ubiquitination. Functionally, E3 ubiquitin ligase that acts as a key regulator of DNA repair in response to replication stress. Acts by mediating ubiquitination of the CMG helicase complex, promoting the unloading of the CMG helicase complex by the p97 ATPase (cdc-48.1 or cdc-48.2). This Caenorhabditis elegans protein is E3 ubiquitin-protein ligase trul-1.